The sequence spans 357 residues: Biotin synthase (357 aa).

One can recognise a Radical SAM core domain in the interval 41-268 (NEVQISRLLS…KSRVRLSAGR (228 aa)). Positions 56, 60, and 63 each coordinate [4Fe-4S] cluster. Positions 100, 131, 191, and 263 each coordinate [2Fe-2S] cluster.

This sequence belongs to the radical SAM superfamily. Biotin synthase family. In terms of assembly, homodimer. [4Fe-4S] cluster is required as a cofactor. [2Fe-2S] cluster serves as cofactor.

The enzyme catalyses (4R,5S)-dethiobiotin + (sulfur carrier)-SH + 2 reduced [2Fe-2S]-[ferredoxin] + 2 S-adenosyl-L-methionine = (sulfur carrier)-H + biotin + 2 5'-deoxyadenosine + 2 L-methionine + 2 oxidized [2Fe-2S]-[ferredoxin]. Its pathway is cofactor biosynthesis; biotin biosynthesis; biotin from 7,8-diaminononanoate: step 2/2. Functionally, catalyzes the conversion of dethiobiotin (DTB) to biotin by the insertion of a sulfur atom into dethiobiotin via a radical-based mechanism. This chain is Biotin synthase, found in Shewanella denitrificans (strain OS217 / ATCC BAA-1090 / DSM 15013).